The primary structure comprises 312 residues: Pre-mRNA-splicing factor 38A (312 aa).

Positions 1-179 are N-terminal protein interaction domain; sequence MANRTVKDAH…VLEEAEQLEP (179 aa). S11, S193, S194, S209, and S226 each carry phosphoserine. Residues 170–204 adopt a coiled-coil conformation; it reads VLEEAEQLEPRVSALEEDMDDVESSEEEEEEDEKL. The tract at residues 181-312 is disordered; it reads VSALEEDMDD…SHKKSRRGNE (132 aa). The span at 184–202 shows a compositional bias: acidic residues; it reads LEEDMDDVESSEEEEEEDE. A compositionally biased stretch (basic and acidic residues) spans 203 to 224; sequence KLERVPSPDHRRRSYRDLDKPR. Composition is skewed to basic residues over residues 225–294 and 301–312; these read RSPT…RSHS and KKSHKKSRRGNE.

Belongs to the PRP38 family. In terms of assembly, component of the spliceosome B complex. Interacts (via N-terminal interaction domain) with ZMAT2 and MFAP1.

The protein resides in the nucleus. Its function is as follows. Involved in pre-mRNA splicing as a component of the spliceosome. In Bos taurus (Bovine), this protein is Pre-mRNA-splicing factor 38A (PRPF38A).